A 471-amino-acid polypeptide reads, in one-letter code: Type 2 glycosyltransferase (471 aa).

A helical membrane pass occupies residues 4–24 (ILGWFWAFVSAFVLRYLRTIV). N-linked (GlcNAc...) asparagine glycosylation is found at Asn29, Asn88, and Asn222. 3 helical membrane passes run 305-325 (CLQT…FYSL), 339-359 (MAFT…KLWG), and 368-388 (VIYI…KFWG). Asn458 carries N-linked (GlcNAc...) asparagine glycosylation.

It belongs to the GT2 glycosyltransferase family.

The protein resides in the cell membrane. Its function is as follows. Glycosyltransferase involved in the maintenance of the outermost surface of the fungal cell wall. Likely functions in the synthesis of a currently unknown, potentially minor but widespread, extracellular or outer cell wall polysaccharide which plays a key role in facilitating many interactions between plants and fungi by enabling hyphal growth on solid matrices. The protein is Type 2 glycosyltransferase of Zymoseptoria tritici (strain CBS 115943 / IPO323) (Speckled leaf blotch fungus).